Reading from the N-terminus, the 279-residue chain is Putative cysteine-rich repeat secretory protein 22 (279 aa).

Positions 1 to 31 (MSSSSASKLLGSVLVFAMISVQIVFIHCVMS) are cleaved as a signal peptide. Gnk2-homologous domains follow at residues 44 to 146 (YLHH…PINS) and 152 to 276 (YEYN…LYRF).

It belongs to the cysteine-rich repeat secretory protein family.

Its subcellular location is the secreted. The sequence is that of Putative cysteine-rich repeat secretory protein 22 (CRRSP22) from Arabidopsis thaliana (Mouse-ear cress).